The following is a 1366-amino-acid chain: Collagen alpha-2(I) chain (1366 aa).

An N-terminal signal peptide occupies residues 1 to 22 (MLSFVDTRTLLLLAVTSCLATC). Residue Q23 is modified to Pyrrolidone carboxylic acid. A propeptide spans 23 to 79 (QSLQEATARKGPTGDRGPRGERGPPGPPGRDGDDGIPGPPGPPGPPGPPGLGGNFAA) (N-terminal propeptide). The disordered stretch occupies residues 27–1131 (EATARKGPTG…PRSPPSLRPK (1105 aa)). Basic and acidic residues predominate over residues 34 to 44 (PTGDRGPRGER). Residues 59–71 (PGPPGPPGPPGPP) show a composition bias toward pro residues. K84 is subject to Allysine. Positions 84 to 94 (KGVGLGPGPMG) are enriched in gly residues. The span at 95-132 (LMGPRGPPGASGAPGPQGFQGPAGEPGEPGQTGPAGAR) shows a compositional bias: low complexity. The segment covering 141–155 (AGEDGHPGKPGRPGE) has biased composition (basic and acidic residues). K177 is subject to 5-hydroxylysine; alternate. O-linked (Gal...) hydroxylysine; alternate glycosylation is present at K177. 8 stretches are compositionally biased toward low complexity: residues 225-254 (VGAP…SAGP), 279-293 (AGPR…VSGP), 300-321 (PGAN…AGAP), 330-345 (PGPV…RGIV), 384-408 (NGEA…RGLP), 423-434 (RGATGPAGVRGP), 470-489 (LPGI…RGEP), and 513-531 (AGLA…NGAQ). A compositionally biased stretch (gly residues) spans 538–547 (GVQGGKGEQG). Positions 594–611 (PGESGAAGPSGPIGSRGP) are enriched in low complexity. Over residues 634–643 (GASGPGGLPG) the composition is skewed to gly residues. Composition is skewed to low complexity over residues 668–690 (NPGR…AGAT) and 717–737 (VGPA…QPGA). Basic and acidic residues predominate over residues 738 to 747 (KGERGTKGPK). Low complexity predominate over residues 756-765 (TGPIGSAGPS). Residues 775 to 784 (GSRGDGGPPG) show a composition bias toward gly residues. 5 stretches are compositionally biased toward low complexity: residues 785-795 (ATGFPGAAGRT), 863-876 (PQGL…LGLP), 893-932 (EPGP…NPGN), 951-974 (PGNI…PTGK), and 981-1001 (PGPA…PSGP). The segment covering 1005 to 1016 (RGDKGEPGEKGP) has biased composition (basic and acidic residues). Over residues 1089 to 1103 (AGPPGPPGPPGPPGP) the composition is skewed to pro residues. Positions 1120-1366 (DQPRSPPSLR…RVDVGPVCFK (247 aa)) are cleaved as a propeptide — C-terminal propeptide. The 234-residue stretch at 1133–1366 (YEVDATLKSL…RVDVGPVCFK (234 aa)) folds into the Fibrillar collagen NC1 domain. Intrachain disulfides connect C1163-C1195, C1203-C1364, and C1272-C1317. Residues D1181, N1183, Q1184, C1186, and D1189 each coordinate Ca(2+).

It belongs to the fibrillar collagen family. In terms of assembly, trimers of one alpha 2(I) and two alpha 1(I) chains. Interacts (via C-terminus) with TMEM131 (via PapD-L domain); the interaction is direct and is involved in assembly and TRAPPIII ER-to-Golgi transport complex-dependent secretion of collagen. Prolines at the third position of the tripeptide repeating unit (G-X-Y) are hydroxylated in some or all of the chains. In terms of tissue distribution, forms the fibrils of tendon, ligaments and bones. In bones the fibrils are mineralized with calcium hydroxyapatite.

The protein resides in the secreted. Its subcellular location is the extracellular space. It is found in the extracellular matrix. Type I collagen is a member of group I collagen (fibrillar forming collagen). The sequence is that of Collagen alpha-2(I) chain (COL1A2) from Canis lupus familiaris (Dog).